Here is a 241-residue protein sequence, read N- to C-terminus: tRNA (guanine-N(1)-)-methyltransferase (241 aa).

S-adenosyl-L-methionine contacts are provided by residues glycine 108 and 127–132; that span reads LGDYVL.

It belongs to the RNA methyltransferase TrmD family. Homodimer.

Its subcellular location is the cytoplasm. It catalyses the reaction guanosine(37) in tRNA + S-adenosyl-L-methionine = N(1)-methylguanosine(37) in tRNA + S-adenosyl-L-homocysteine + H(+). Functionally, specifically methylates guanosine-37 in various tRNAs. The protein is tRNA (guanine-N(1)-)-methyltransferase of Streptococcus suis (strain 98HAH33).